The primary structure comprises 43 residues: Metallothionein-3 (43 aa).

Belongs to the metallothionein superfamily. Type 5 family.

Its function is as follows. This protein binds cations of several transition elements. Thought to be involved in metal ion homeostasis. This chain is Metallothionein-3 (MtnC), found in Drosophila melanogaster (Fruit fly).